Reading from the N-terminus, the 457-residue chain is Adenylosuccinate synthetase isozyme 1 (457 aa).

A disordered region spans residues 1 to 25 (MSGTRASNDRPPSAGGVKRGRLQHE). Residues 42–48 (GDEGKGK) and 70–72 (GHT) each bind GTP. Asp-43 functions as the Proton acceptor in the catalytic mechanism. 2 residues coordinate Mg(2+): Asp-43 and Gly-70. Asp-43 serves as a coordination point for substrate. IMP-binding positions include 43–46 (DEGK), 68–71 (NAGH), Thr-163, Arg-177, Asn-256, Thr-271, and Arg-335. The Proton donor role is filled by His-71. Residue 331 to 337 (VTTGRKR) coordinates substrate. Residues Arg-337, 363–365 (KLD), and 445–448 (GVGK) each bind GTP.

Belongs to the adenylosuccinate synthetase family. As to quaternary structure, homodimer. Mg(2+) serves as cofactor. In terms of tissue distribution, predominantly expressed in the striated muscle tissues.

The protein localises to the cytoplasm. It catalyses the reaction IMP + L-aspartate + GTP = N(6)-(1,2-dicarboxyethyl)-AMP + GDP + phosphate + 2 H(+). Its pathway is purine metabolism; AMP biosynthesis via de novo pathway; AMP from IMP: step 1/2. In terms of biological role, component of the purine nucleotide cycle (PNC), which interconverts IMP and AMP to regulate the nucleotide levels in various tissues, and which contributes to glycolysis and ammoniagenesis. Catalyzes the first committed step in the biosynthesis of AMP from IMP. The protein is Adenylosuccinate synthetase isozyme 1 of Sus scrofa (Pig).